The chain runs to 406 residues: Erythromycin esterase type I (406 aa).

In terms of biological role, this enzyme confers resistance to erythromycin through inactivation by hydrolyzing the lactone ring of the antibiotic. This is Erythromycin esterase type I (ereA) from Escherichia coli.